The following is a 186-amino-acid chain: PRA1 family protein G2 (186 aa).

The next 4 membrane-spanning stretches (helical) occupy residues 66–86 (YFFVNYTIIVSTCAAFALITA), 87–107 (SPVALIVVGAIIALWLIFHFF), 119–139 (VGDRTVLLFLVLASVWAIWFT), and 142–162 (AVNLAVGVSVGLLLCIIHAVF).

The protein belongs to the PRA1 family. In terms of tissue distribution, expressed in roots and trichomes.

The protein resides in the endoplasmic reticulum membrane. In terms of biological role, may be involved in both secretory and endocytic intracellular trafficking in the endosomal/prevacuolar compartments. In Arabidopsis thaliana (Mouse-ear cress), this protein is PRA1 family protein G2 (PRA1G2).